A 290-amino-acid chain; its full sequence is tRNA(Ile)-lysidine synthase, chloroplastic (290 aa).

Residue 33-38 (SGGQDS) participates in ATP binding.

This sequence belongs to the tRNA(Ile)-lysidine synthase family.

It localises to the plastid. The protein localises to the chloroplast. The enzyme catalyses cytidine(34) in tRNA(Ile2) + L-lysine + ATP = lysidine(34) in tRNA(Ile2) + AMP + diphosphate + H(+). Its function is as follows. Ligates lysine onto the cytidine present at position 34 of the AUA codon-specific tRNA(Ile) that contains the anticodon CAU, in an ATP-dependent manner. Cytidine is converted to lysidine, thus changing the amino acid specificity of the tRNA from methionine to isoleucine. The chain is tRNA(Ile)-lysidine synthase, chloroplastic from Cyanidioschyzon merolae (strain NIES-3377 / 10D) (Unicellular red alga).